The chain runs to 30 residues: Cycloviolacin-O10 (30 aa).

Residues 1 to 30 (GIPCGESCVYIPCLTSAVGCSCKSKVCYRN) constitute a cross-link (cyclopeptide (Gly-Asn)). 3 cysteine pairs are disulfide-bonded: C4-C20, C8-C22, and C13-C27.

This is a cyclic peptide. As to expression, expressed in petals and roots but not in leaves, petioles and runners (at protein level).

In terms of biological role, probably participates in a plant defense mechanism. This is Cycloviolacin-O10 from Viola odorata (Sweet violet).